Consider the following 183-residue polypeptide: Inosine/xanthosine triphosphatase (183 aa).

Asp75 is a Mg(2+) binding site. Residue 75 to 76 (DG) participates in substrate binding.

The protein belongs to the YjjX NTPase family. As to quaternary structure, homodimer. Mg(2+) is required as a cofactor. Mn(2+) serves as cofactor.

The enzyme catalyses XTP + H2O = XDP + phosphate + H(+). It catalyses the reaction ITP + H2O = IDP + phosphate + H(+). Phosphatase that hydrolyzes non-canonical purine nucleotides such as XTP and ITP to their respective diphosphate derivatives. Probably excludes non-canonical purines from DNA/RNA precursor pool, thus preventing their incorporation into DNA/RNA and avoiding chromosomal lesions. This chain is Inosine/xanthosine triphosphatase, found in Vibrio vulnificus (strain CMCP6).